Here is a 480-residue protein sequence, read N- to C-terminus: Sestrin-2 (480 aa).

Methionine 1 carries the post-translational modification N-acetylmethionine. The interval 20–45 is disordered; the sequence is PGGVGDSGPGEEQRESRARRGPRGPS. The tract at residues 66-239 is N-terminal domain; mediates the alkylhydroperoxide reductase activity; sequence GLEALMSSGR…APTPPSEQSS (174 aa). Cysteine 125 (cysteine sulfenic acid (-SOH) intermediate) is an active-site residue. Lysine 175 participates in a covalent cross-link: Glycyl lysine isopeptide (Lys-Gly) (interchain with G-Cter in ubiquitin). A disordered region spans residues 222–252; the sequence is ADGSPAPQAPTPPSEQSSPPSRDPLNNSGGF. Serine 249 carries the post-translational modification Phosphoserine. The C-terminal domain; mediates TORC1 regulation stretch occupies residues 308–480; the sequence is PHPDMLCFVE…ALRAITRYMT (173 aa). L-leucine-binding positions include 374–377, threonine 386, and glutamate 451; that span reads TYNT.

It belongs to the sestrin family. As to quaternary structure, interacts with the GATOR2 complex which is composed of MIOS, SEC13, SEH1L, WDR24 and WDR59; the interaction is negatively regulated by leucine. Conveys leucine availability via direct interaction with SEH1L and WDR24 components of the GATOR2 complex. Interacts with RRAGA, RRAGB, RRAGC and RRAGD; may function as a guanine nucleotide dissociation inhibitor for RRAGs and regulate them. May interact with the TORC2 complex. Interacts with KEAP1, RBX1, SQSTM and ULK1; to regulate the degradation of KEAP1. May also associate with the complex composed of TSC1, TSC2 and the AMP-responsive protein kinase/AMPK to regulate TORC1 signaling. May interact with PRDX1. Post-translationally, phosphorylated by ULK1 at multiple sites. Ubiquitinated at Lys-175 by RNF167 via 'Lys-63'-linked polyubiquitination in response to leucine deprivation: ubiquitination promotes SESN2-interaction with the GATOR2 complex, leading to inhibit the TORC1 signaling pathway. Deubiquitinated at Lys-175 by STAMBPL1, promoting the TORC1 signaling pathway. Ubiquitinated by RNF186; ubiquitination mediates proteasomal degradation.

The protein resides in the cytoplasm. The enzyme catalyses a hydroperoxide + L-cysteinyl-[protein] = S-hydroxy-L-cysteinyl-[protein] + an alcohol. Functionally, functions as an intracellular leucine sensor that negatively regulates the mTORC1 signaling pathway through the GATOR complex. In absence of leucine, binds the GATOR subcomplex GATOR2 and prevents mTORC1 signaling. Binding of leucine to SESN2 disrupts its interaction with GATOR2 thereby activating the TORC1 signaling pathway. This stress-inducible metabolic regulator also plays a role in protection against oxidative and genotoxic stresses. May negatively regulate protein translation in response to endoplasmic reticulum stress, via mTORC1. May positively regulate the transcription by NFE2L2 of genes involved in the response to oxidative stress by facilitating the SQSTM1-mediated autophagic degradation of KEAP1. May also mediate TP53 inhibition of TORC1 signaling upon genotoxic stress. Moreover, may prevent the accumulation of reactive oxygen species (ROS) through the alkylhydroperoxide reductase activity born by the N-terminal domain of the protein. Was originally reported to contribute to oxidative stress resistance by reducing PRDX1. However, this could not be confirmed. The sequence is that of Sestrin-2 from Pongo abelii (Sumatran orangutan).